The primary structure comprises 207 residues: N-(5'-phosphoribosyl)anthranilate isomerase (207 aa).

It belongs to the TrpF family.

The enzyme catalyses N-(5-phospho-beta-D-ribosyl)anthranilate = 1-(2-carboxyphenylamino)-1-deoxy-D-ribulose 5-phosphate. Its pathway is amino-acid biosynthesis; L-tryptophan biosynthesis; L-tryptophan from chorismate: step 3/5. This chain is N-(5'-phosphoribosyl)anthranilate isomerase, found in Geotalea daltonii (strain DSM 22248 / JCM 15807 / FRC-32) (Geobacter daltonii).